Here is a 232-residue protein sequence, read N- to C-terminus: Large ribosomal subunit protein uL10c (232 aa).

A chloroplast-targeting transit peptide spans 1–52 (MESTLFLSKPLPTTIKTTTHSLSSVYPNPFKPNNLTFPRTTHKHPTTTTITA).

Belongs to the universal ribosomal protein uL10 family. Component of the chloroplast large ribosomal subunit (LSU). Mature 70S chloroplast ribosomes of higher plants consist of a small (30S) and a large (50S) subunit. The 30S small subunit contains 1 molecule of ribosomal RNA (16S rRNA) and 24 different proteins. The 50S large subunit contains 3 rRNA molecules (23S, 5S and 4.5S rRNA) and 33 different proteins.

It localises to the plastid. Its subcellular location is the chloroplast. Component of the chloroplast ribosome (chloro-ribosome), a dedicated translation machinery responsible for the synthesis of chloroplast genome-encoded proteins, including proteins of the transcription and translation machinery and components of the photosynthetic apparatus. In Spinacia oleracea (Spinach), this protein is Large ribosomal subunit protein uL10c (RPL10).